The primary structure comprises 264 residues: Thymidylate synthase (264 aa).

DUMP contacts are provided by residues Arg-21 and 126 to 127; that span reads RR. The active-site Nucleophile is the Cys-146. DUMP-binding positions include 166–169, Asn-177, and 207–209; these read RSAD and HLY. Asp-169 contacts (6R)-5,10-methylene-5,6,7,8-tetrahydrofolate. Ala-263 lines the (6R)-5,10-methylene-5,6,7,8-tetrahydrofolate pocket.

This sequence belongs to the thymidylate synthase family. Bacterial-type ThyA subfamily. In terms of assembly, homodimer.

The protein resides in the cytoplasm. It carries out the reaction dUMP + (6R)-5,10-methylene-5,6,7,8-tetrahydrofolate = 7,8-dihydrofolate + dTMP. The protein operates within pyrimidine metabolism; dTTP biosynthesis. Its function is as follows. Catalyzes the reductive methylation of 2'-deoxyuridine-5'-monophosphate (dUMP) to 2'-deoxythymidine-5'-monophosphate (dTMP) while utilizing 5,10-methylenetetrahydrofolate (mTHF) as the methyl donor and reductant in the reaction, yielding dihydrofolate (DHF) as a by-product. This enzymatic reaction provides an intracellular de novo source of dTMP, an essential precursor for DNA biosynthesis. The polypeptide is Thymidylate synthase (Bradyrhizobium sp. (strain BTAi1 / ATCC BAA-1182)).